The following is a 114-amino-acid chain: Superoxide dismutase [Cu-Zn] (114 aa).

3 residues coordinate Cu cation: histidine 37, histidine 39, and histidine 54. Residues 48 to 76 (CMSSGPHFNPRSKEHGAPTDENRHLGDLG) are disordered. Residues histidine 54, histidine 62, histidine 71, and aspartate 74 each coordinate Zn(2+). The segment covering 58 to 73 (RSKEHGAPTDENRHLG) has biased composition (basic and acidic residues). A Cu cation-binding site is contributed by histidine 111.

It belongs to the Cu-Zn superoxide dismutase family. As to quaternary structure, homodimer. Requires Cu cation as cofactor. It depends on Zn(2+) as a cofactor.

The protein resides in the cytoplasm. The enzyme catalyses 2 superoxide + 2 H(+) = H2O2 + O2. In terms of biological role, destroys radicals which are normally produced within the cells and which are toxic to biological systems. In Drosophila obscura (Fruit fly), this protein is Superoxide dismutase [Cu-Zn].